Here is a 263-residue protein sequence, read N- to C-terminus: Calpain small subunit 1 (263 aa).

Residue M1 is modified to N-acetylmethionine. Phosphoserine is present on S6. The EF-hand 1; atypical domain occupies 91–125 (EEVRQFRRLFAQLAGDDMEVSATELMNILNKVVTR). Ca(2+) contacts are provided by A104, D107, E109, E114, D132, D147, D149, T151, K153, and E158. 4 consecutive EF-hand domains span residues 134–167 (FGIDTCRSMVAVMDSDTTGKLGFEEFKYLWNNIK), 164–199 (NNIKKWQAVYKQFDVDRSGTIGSSELPGAFEAAGFR), 200–228 (LNEHLYNMIIRRYSDEGGNMDFDNFISCL), and 229–263 (VRLDAMFRAFKSLDKDGTGQIQVNIQEWLQLTMYS). K174 is modified (N6-acetyllysine). Ca(2+)-binding residues include D177, D179, S181, T183, E188, and D220.

In terms of assembly, homodimer or heterodimer of a large (catalytic) and a small (regulatory) subunit. In presence of calcium, the heterodimer dissociates.

Its subcellular location is the cytoplasm. The protein resides in the cell membrane. Functionally, regulatory subunit of the calcium-regulated non-lysosomal thiol-protease which catalyzes limited proteolysis of substrates involved in cytoskeletal remodeling and signal transduction. Essential for embryonic development. The polypeptide is Calpain small subunit 1 (CAPNS1) (Bos taurus (Bovine)).